The following is a 700-amino-acid chain: Elongation factor G 2 (700 aa).

The tr-type G domain maps to 8 to 290 (ERYRNIGISA…AVLDFLPSPI (283 aa)). Residues 17–24 (AHIDAGKT), 88–92 (DTPGH), and 142–145 (NKMD) contribute to the GTP site.

The protein belongs to the TRAFAC class translation factor GTPase superfamily. Classic translation factor GTPase family. EF-G/EF-2 subfamily.

The protein localises to the cytoplasm. Catalyzes the GTP-dependent ribosomal translocation step during translation elongation. During this step, the ribosome changes from the pre-translocational (PRE) to the post-translocational (POST) state as the newly formed A-site-bound peptidyl-tRNA and P-site-bound deacylated tRNA move to the P and E sites, respectively. Catalyzes the coordinated movement of the two tRNA molecules, the mRNA and conformational changes in the ribosome. In Paraburkholderia xenovorans (strain LB400), this protein is Elongation factor G 2.